The primary structure comprises 166 residues: Desiccation-related protein At2g46140 (166 aa).

It belongs to the LEA type 2 family.

The chain is Desiccation-related protein At2g46140 from Arabidopsis thaliana (Mouse-ear cress).